Consider the following 192-residue polypeptide: UPF0316 protein SSP0880 (192 aa).

3 consecutive transmembrane segments (helical) span residues 8-28 (PWLM…CLTM), 40-60 (VAAI…GMVM), and 66-86 (IQNV…GMKI).

Belongs to the UPF0316 family.

It is found in the cell membrane. In Staphylococcus saprophyticus subsp. saprophyticus (strain ATCC 15305 / DSM 20229 / NCIMB 8711 / NCTC 7292 / S-41), this protein is UPF0316 protein SSP0880.